The sequence spans 297 residues: Aspartate carbamoyltransferase catalytic subunit (297 aa).

R52 and T53 together coordinate carbamoyl phosphate. K80 contacts L-aspartate. Positions 102, 130, and 133 each coordinate carbamoyl phosphate. Residues R167 and R217 each contribute to the L-aspartate site. G256 and P257 together coordinate carbamoyl phosphate.

This sequence belongs to the aspartate/ornithine carbamoyltransferase superfamily. ATCase family. Heterododecamer (2C3:3R2) of six catalytic PyrB chains organized as two trimers (C3), and six regulatory PyrI chains organized as three dimers (R2).

It catalyses the reaction carbamoyl phosphate + L-aspartate = N-carbamoyl-L-aspartate + phosphate + H(+). Its pathway is pyrimidine metabolism; UMP biosynthesis via de novo pathway; (S)-dihydroorotate from bicarbonate: step 2/3. Functionally, catalyzes the condensation of carbamoyl phosphate and aspartate to form carbamoyl aspartate and inorganic phosphate, the committed step in the de novo pyrimidine nucleotide biosynthesis pathway. The polypeptide is Aspartate carbamoyltransferase catalytic subunit (Helicobacter hepaticus (strain ATCC 51449 / 3B1)).